The chain runs to 429 residues: Bifunctional protein GlmU (429 aa).

Positions 1-223 (MKTSILILAA…EDEFMGINDK (223 aa)) are pyrophosphorylase. UDP-N-acetyl-alpha-D-glucosamine contacts are provided by residues 8 to 11 (LAAG), K22, and 81 to 82 (GT). D102 lines the Mg(2+) pocket. UDP-N-acetyl-alpha-D-glucosamine contacts are provided by G135, E149, N164, and N221. Residue N221 participates in Mg(2+) binding. The segment at 224 to 244 (FELSIAENFMQEKIKKYWMQQ) is linker. Residues 245–429 (GVIFHLPQST…KDYYYKKFQK (185 aa)) are N-acetyltransferase. Residues R308 and K325 each coordinate UDP-N-acetyl-alpha-D-glucosamine. H336 (proton acceptor) is an active-site residue. UDP-N-acetyl-alpha-D-glucosamine contacts are provided by Y339 and N350. Acetyl-CoA contacts are provided by residues 359-360 (NY), S378, A396, and R413.

This sequence in the N-terminal section; belongs to the N-acetylglucosamine-1-phosphate uridyltransferase family. In the C-terminal section; belongs to the transferase hexapeptide repeat family. Homotrimer. Requires Mg(2+) as cofactor.

It localises to the cytoplasm. The enzyme catalyses alpha-D-glucosamine 1-phosphate + acetyl-CoA = N-acetyl-alpha-D-glucosamine 1-phosphate + CoA + H(+). It carries out the reaction N-acetyl-alpha-D-glucosamine 1-phosphate + UTP + H(+) = UDP-N-acetyl-alpha-D-glucosamine + diphosphate. It participates in nucleotide-sugar biosynthesis; UDP-N-acetyl-alpha-D-glucosamine biosynthesis; N-acetyl-alpha-D-glucosamine 1-phosphate from alpha-D-glucosamine 6-phosphate (route II): step 2/2. The protein operates within nucleotide-sugar biosynthesis; UDP-N-acetyl-alpha-D-glucosamine biosynthesis; UDP-N-acetyl-alpha-D-glucosamine from N-acetyl-alpha-D-glucosamine 1-phosphate: step 1/1. Its pathway is bacterial outer membrane biogenesis; LPS lipid A biosynthesis. Catalyzes the last two sequential reactions in the de novo biosynthetic pathway for UDP-N-acetylglucosamine (UDP-GlcNAc). The C-terminal domain catalyzes the transfer of acetyl group from acetyl coenzyme A to glucosamine-1-phosphate (GlcN-1-P) to produce N-acetylglucosamine-1-phosphate (GlcNAc-1-P), which is converted into UDP-GlcNAc by the transfer of uridine 5-monophosphate (from uridine 5-triphosphate), a reaction catalyzed by the N-terminal domain. This chain is Bifunctional protein GlmU, found in Campylobacter jejuni subsp. jejuni serotype O:23/36 (strain 81-176).